Here is a 145-residue protein sequence, read N- to C-terminus: Large ribosomal subunit protein uL13 (145 aa).

The protein belongs to the universal ribosomal protein uL13 family. In terms of assembly, part of the 50S ribosomal subunit.

Functionally, this protein is one of the early assembly proteins of the 50S ribosomal subunit, although it is not seen to bind rRNA by itself. It is important during the early stages of 50S assembly. The chain is Large ribosomal subunit protein uL13 from Staphylococcus haemolyticus (strain JCSC1435).